Reading from the N-terminus, the 601-residue chain is N-acetyltransferase ESCO2 (601 aa).

A phosphoserine mark is found at serine 29, serine 75, serine 223, and serine 244. The interval 222-243 is disordered; that stretch reads SSLENEPSLGRTQKSKSEVIED. Residues 282-305 are compositionally biased toward basic and acidic residues; it reads KEKLIKDSSDDRVSSKEHKVDKNE. Residues 282-315 are disordered; sequence KEKLIKDSSDDRVSSKEHKVDKNEAFSSEDSLGE. Over residues 306 to 315 the composition is skewed to polar residues; that stretch reads AFSSEDSLGE. Serine 312 carries the post-translational modification Phosphoserine. The CCHH-type zinc-finger motif lies at 387 to 411; the sequence is TVCKSCGMIYTASNPEDEMQHVQHH. Serine 512 bears the Phosphoserine mark.

It belongs to the acetyltransferase family. ECO subfamily. Widely expressed in fetal tissues. In adult, it is expressed in thymus, placenta and small intestine.

It localises to the nucleus. It is found in the chromosome. It carries out the reaction L-lysyl-[protein] + acetyl-CoA = N(6)-acetyl-L-lysyl-[protein] + CoA + H(+). In terms of biological role, acetyltransferase required for the establishment of sister chromatid cohesion. Couples the processes of cohesion and DNA replication to ensure that only sister chromatids become paired together. In contrast to the structural cohesins, the deposition and establishment factors are required only during the S phase. Acetylates the cohesin component SMC3. The polypeptide is N-acetyltransferase ESCO2 (Homo sapiens (Human)).